We begin with the raw amino-acid sequence, 720 residues long: Fatty acid CoA ligase Acsl3 (720 aa).

The helical; Signal-anchor for type III membrane protein transmembrane segment at 21-41 threads the bilayer; the sequence is ILLYFIHFIISLYTILTYIPF. The Cytoplasmic segment spans residues 42-720; it reads YFLCESKQEK…ADIERMYGRK (679 aa). S683 carries the post-translational modification Phosphoserine.

This sequence belongs to the ATP-dependent AMP-binding enzyme family. Mg(2+) serves as cofactor.

The protein resides in the mitochondrion outer membrane. It localises to the peroxisome membrane. It is found in the microsome membrane. The protein localises to the endoplasmic reticulum membrane. The catalysed reaction is a long-chain fatty acid + ATP + CoA = a long-chain fatty acyl-CoA + AMP + diphosphate. It catalyses the reaction (E)-hexadec-2-enoate + ATP + CoA = (2E)-hexadecenoyl-CoA + AMP + diphosphate. The enzyme catalyses (5Z,8Z,11Z,14Z)-eicosatetraenoate + ATP + CoA = (5Z,8Z,11Z,14Z)-eicosatetraenoyl-CoA + AMP + diphosphate. It carries out the reaction 15-hydroxy-(5Z,8Z,11Z,13E)-eicosatetraenoate + ATP + CoA = 15-hydroxy-(5Z,8Z,11Z,13E)-eicosatetraenoyl-CoA + AMP + diphosphate. The catalysed reaction is 12-hydroxy-(5Z,8Z,10E,14Z)-eicosatetraenoate + ATP + CoA = 12-hydroxy-(5Z,8Z,10E,14Z)-eicosatetraenoyl-CoA + AMP + diphosphate. It catalyses the reaction 5-hydroxy-(6E,8Z,11Z,14Z)-eicosatetraenoate + ATP + CoA = 5-hydroxy-(6E,8Z,11Z,14Z)-eicosatetraenoyl-CoA + AMP + diphosphate. The enzyme catalyses 14,15-epoxy-(5Z,8Z,11Z)-eicosatrienoate + ATP + CoA = 14,15-epoxy-(5Z,8Z,11Z)-eicosatrienoyl-CoA + AMP + diphosphate. It carries out the reaction 11,12-epoxy-(5Z,8Z,14Z)-eicosatrienoate + ATP + CoA = 11,12-epoxy-(5Z,8Z,14Z)-eicosatrienoyl-CoA + AMP + diphosphate. The catalysed reaction is a medium-chain fatty acid + ATP + CoA = a medium-chain fatty acyl-CoA + AMP + diphosphate. It catalyses the reaction hexadecanoate + ATP + CoA = hexadecanoyl-CoA + AMP + diphosphate. The enzyme catalyses tetradecanoate + ATP + CoA = tetradecanoyl-CoA + AMP + diphosphate. It carries out the reaction dodecanoate + ATP + CoA = dodecanoyl-CoA + AMP + diphosphate. The catalysed reaction is octadecanoate + ATP + CoA = octadecanoyl-CoA + AMP + diphosphate. It catalyses the reaction eicosanoate + ATP + CoA = eicosanoyl-CoA + AMP + diphosphate. The enzyme catalyses (9Z)-octadecenoate + ATP + CoA = (9Z)-octadecenoyl-CoA + AMP + diphosphate. It carries out the reaction (9Z)-hexadecenoate + ATP + CoA = (9Z)-hexadecenoyl-CoA + AMP + diphosphate. The catalysed reaction is (9Z,12Z)-octadecadienoate + ATP + CoA = (9Z,12Z)-octadecadienoyl-CoA + AMP + diphosphate. It catalyses the reaction (9Z,12Z,15Z)-octadecatrienoate + ATP + CoA = (9Z,12Z,15Z)-octadecatrienoyl-CoA + AMP + diphosphate. The enzyme catalyses (4Z,7Z,10Z,13Z,16Z,19Z)-docosahexaenoate + ATP + CoA = (4Z,7Z,10Z,13Z,16Z,19Z)-docosahexaenoyl-CoA + AMP + diphosphate. It carries out the reaction (5Z,8Z,11Z,14Z,17Z)-eicosapentaenoate + ATP + CoA = (5Z,8Z,11Z,14Z,17Z)-eicosapentaenoyl-CoA + AMP + diphosphate. The catalysed reaction is a fatty acid + ATP + CoA = a fatty acyl-CoA + AMP + diphosphate. In terms of biological role, acyl-CoA synthetases (ACSL) activates long-chain fatty acids for both synthesis of cellular lipids, and degradation via beta-oxidation. ACSL3 is required for the incorporation of fatty acids into phosphatidylcholine, the major phospholipid located on the surface of VLDL (very low density lipoproteins). Has mainly an anabolic role in energy metabolism. Mediates hepatic lipogenesis. Preferentially uses myristate, laurate, arachidonate and eicosapentaenoate as substrates. Both isoforms exhibit the same level of activity. The sequence is that of Fatty acid CoA ligase Acsl3 from Mus musculus (Mouse).